We begin with the raw amino-acid sequence, 155 residues long: MSEQNNNEMSFQIQRIYTKDVSFEAPNAPHVFQKDWQPEVKLDLDTASTQLADDVYEVVLRVTVTASLGEETAFLCEVQQGGIFSVGGIEGNQLAHCLGAYCPNILFPYARECITSLVSRGTFPQLNLAPVNFDALFMNYLQQQAGEGTEEHQDA.

Belongs to the SecB family. In terms of assembly, homotetramer, a dimer of dimers. One homotetramer interacts with 1 SecA dimer.

It localises to the cytoplasm. Functionally, one of the proteins required for the normal export of preproteins out of the cell cytoplasm. It is a molecular chaperone that binds to a subset of precursor proteins, maintaining them in a translocation-competent state. It also specifically binds to its receptor SecA. This Enterobacter sp. (strain 638) protein is Protein-export protein SecB.